Consider the following 249-residue polypeptide: Low affinity immunoglobulin gamma Fc region receptor III-A (249 aa).

A signal peptide spans 1 to 20; the sequence is MWQLLLPTALVLTAFSGIQA. At 21–203 the chain is on the extracellular side; the sequence is GLQKAVVNLD…SPSMFPPWHQ (183 aa). Ig-like C2-type domains follow at residues 22–102 and 119–188; these read LQKA…VQLE and EGDP…FRIS. 2 disulfide bridges follow: cysteine 46-cysteine 88 and cysteine 127-cysteine 171. Asparagine 62, asparagine 164, and asparagine 179 each carry an N-linked (GlcNAc...) asparagine glycan. A helical membrane pass occupies residues 204 to 224; it reads ITFCLLIGLLFAIDTVLYFSV. At 225–249 the chain is on the cytoplasmic side; the sequence is RRGLQSPVADYEEPKIQWSKEPQDK. The residue at position 235 (tyrosine 235) is a Phosphotyrosine.

As to quaternary structure, forms a heterooligomeric complex with ITAM-containing signaling subunits FCER1G. Interacts (via transmembrane domain) with signaling subunits; this interaction is a prerequisite for receptor complex expression on the cell surface and intracellular signal transduction. Binds the Fc region of antigen-complexed IgG. Post-translationally, N-glycosylated. In terms of processing, phosphorylated following receptor ligation. Detected on myeloid cells, peripheral blood monocytes, splenic and bone marrow dendritic cells, and thioglycollate-elicited macrophages and neutrophils but absent from lymphoid populations with no expression observed on T cells, B cells, NK cells or other granulocytes (at protein level). Expressed in peripheral blood leukocytes, spleen, liver, thymus and small intestine. Expressed in splenic dendritic cell subsets (at protein level).

It localises to the cell membrane. In terms of biological role, receptor for the invariable Fc fragment of immunoglobulin gamma (IgG). Binds with intermediate affinity to both IgG2a and IgG2b. Can bind to IgG2a and IgG2b monomers. Does not display binding to IgG1 or IgG3. Recognizes neutralizing virus-specific IgGs displayed on the cell surface of infected cells and triggers antibody-dependent cellular cytotoxicity (ADCC). Confers protection to lethal influenza virus infection. On splenic dendritic cells, uptakes antigen immune complexes and efficiently divert them into MHC class I and II antigen presentation pathways to provide for superior priming of CD4-positive and CD8-positive T cell immune responses. Mediates neutrophil activation by IgG complexes redundantly with FCGR2A. Plays a role in promoting bone resorption by enhancing osteoclast differentiation following binding to IgG2a. Also acts as a receptor for the Fc region of immunoglobulin epsilon (IgE). Binds with low affinity to both the a and b allotypes of IgE. Has also been shown to bind to IgE allotype a only but not to allotype b. Binds aggregated IgE but not the monomeric form and bound monomeric IgG is readily displaced by IgE complexes. Binding to IgE promotes macrophage-mediated phagocytosis, antigen presentation to T cells, production of pro-inflammatory cytokines and the late phase of cutaneous allergic reactions. Mediates enhanced ADCC in response to afucosylated IgGs. The polypeptide is Low affinity immunoglobulin gamma Fc region receptor III-A (Mus musculus (Mouse)).